A 494-amino-acid polypeptide reads, in one-letter code: Argininosuccinate synthase, chloroplastic (494 aa).

The N-terminal 73 residues, 1-73 (MAEISATSFP…SRSCKNQAIR (73 aa)), are a transit peptide targeting the chloroplast. Position 74 is an N-acetylalanine (Ala-74). ATP is bound by residues 102 to 110 (AYSGGLDTS) and Ala-129. Residues Tyr-181 and Ser-186 each coordinate L-citrulline. Gly-211 lines the ATP pocket. Positions 213, 217, and 218 each coordinate L-aspartate. Asn-217 lines the L-citrulline pocket. L-citrulline is bound by residues Arg-221, Ser-270, Ser-279, Glu-355, and Tyr-367.

It belongs to the argininosuccinate synthase family. Type 1 subfamily. As to quaternary structure, homotetramer.

The protein resides in the plastid. The protein localises to the chloroplast. The catalysed reaction is L-citrulline + L-aspartate + ATP = 2-(N(omega)-L-arginino)succinate + AMP + diphosphate + H(+). It functions in the pathway amino-acid biosynthesis; L-arginine biosynthesis; L-arginine from L-ornithine and carbamoyl phosphate: step 2/3. This chain is Argininosuccinate synthase, chloroplastic, found in Arabidopsis thaliana (Mouse-ear cress).